We begin with the raw amino-acid sequence, 61 residues long: uncharacterized protein (61 aa).

This is an uncharacterized protein from Acidianus convivator (ATV).